The chain runs to 589 residues: CTP synthase (589 aa).

Residues 1-281 (MPQSRTHSRT…DAYVVRQLGL (281 aa)) form an amidoligase domain region. A CTP-binding site is contributed by Ser23. Position 23 (Ser23) interacts with UTP. Residues 24–29 (SLGKGL) and Asp81 each bind ATP. Asp81 and Glu155 together coordinate Mg(2+). Residues 162-164 (DIE), 202-207 (KTKPTQ), and Lys238 each bind CTP. UTP contacts are provided by residues 202–207 (KTKPTQ) and Lys238. The Glutamine amidotransferase type-1 domain occupies 306–554 (RIALVGKYVD…VDAALRHKLE (249 aa)). An L-glutamine-binding site is contributed by Gly369. Cys396 (nucleophile; for glutamine hydrolysis) is an active-site residue. Residues 397–400 (LGLQ), Glu419, and Arg480 contribute to the L-glutamine site. Active-site residues include His527 and Glu529. Residues 562–589 (HGEERAAADDEIAESADRDEVASVDSAG) form a disordered region.

It belongs to the CTP synthase family. In terms of assembly, homotetramer.

It carries out the reaction UTP + L-glutamine + ATP + H2O = CTP + L-glutamate + ADP + phosphate + 2 H(+). The enzyme catalyses L-glutamine + H2O = L-glutamate + NH4(+). The catalysed reaction is UTP + NH4(+) + ATP = CTP + ADP + phosphate + 2 H(+). The protein operates within pyrimidine metabolism; CTP biosynthesis via de novo pathway; CTP from UDP: step 2/2. With respect to regulation, allosterically activated by GTP, when glutamine is the substrate; GTP has no effect on the reaction when ammonia is the substrate. The allosteric effector GTP functions by stabilizing the protein conformation that binds the tetrahedral intermediate(s) formed during glutamine hydrolysis. Inhibited by the product CTP, via allosteric rather than competitive inhibition. Its function is as follows. Catalyzes the ATP-dependent amination of UTP to CTP with either L-glutamine or ammonia as the source of nitrogen. Regulates intracellular CTP levels through interactions with the four ribonucleotide triphosphates. The protein is CTP synthase of Rhodococcus opacus (strain B4).